The primary structure comprises 137 residues: Large ribosomal subunit protein uL16 (137 aa).

Over residues 1–19 (MLSPKKVKFRKQQRGRRTG) the composition is skewed to basic residues. Positions 1–20 (MLSPKKVKFRKQQRGRRTGT) are disordered.

The protein belongs to the universal ribosomal protein uL16 family. In terms of assembly, part of the 50S ribosomal subunit.

In terms of biological role, binds 23S rRNA and is also seen to make contacts with the A and possibly P site tRNAs. The chain is Large ribosomal subunit protein uL16 from Desulfosudis oleivorans (strain DSM 6200 / JCM 39069 / Hxd3) (Desulfococcus oleovorans).